Reading from the N-terminus, the 586-residue chain is A-type ATP synthase subunit A (586 aa).

Position 232–239 (232–239) interacts with ATP; it reads GPFGSGKT.

Belongs to the ATPase alpha/beta chains family. In terms of assembly, has multiple subunits with at least A(3), B(3), C, D, E, F, H, I and proteolipid K(x).

It localises to the cell membrane. It carries out the reaction ATP + H2O + 4 H(+)(in) = ADP + phosphate + 5 H(+)(out). In terms of biological role, component of the A-type ATP synthase that produces ATP from ADP in the presence of a proton gradient across the membrane. The A chain is the catalytic subunit. The chain is A-type ATP synthase subunit A from Methanococcus vannielii (strain ATCC 35089 / DSM 1224 / JCM 13029 / OCM 148 / SB).